The chain runs to 62 residues: Large ribosomal subunit protein bL28 (62 aa).

It belongs to the bacterial ribosomal protein bL28 family.

The chain is Large ribosomal subunit protein bL28 from Desulforamulus reducens (strain ATCC BAA-1160 / DSM 100696 / MI-1) (Desulfotomaculum reducens).